Reading from the N-terminus, the 596-residue chain is Aspartate--tRNA(Asp/Asn) ligase (596 aa).

Glu-175 is an L-aspartate binding site. An aspartate region spans residues 199–202 (QQYK). Arg-221 and His-454 together coordinate L-aspartate. 221-223 (RDE) is a binding site for ATP. Glu-488 serves as a coordination point for ATP. Position 495 (Arg-495) interacts with L-aspartate. 540-543 (GIDR) contributes to the ATP binding site.

The protein belongs to the class-II aminoacyl-tRNA synthetase family. Type 1 subfamily. As to quaternary structure, homodimer.

The protein localises to the cytoplasm. The enzyme catalyses tRNA(Asx) + L-aspartate + ATP = L-aspartyl-tRNA(Asx) + AMP + diphosphate. In terms of biological role, aspartyl-tRNA synthetase with relaxed tRNA specificity since it is able to aspartylate not only its cognate tRNA(Asp) but also tRNA(Asn). Reaction proceeds in two steps: L-aspartate is first activated by ATP to form Asp-AMP and then transferred to the acceptor end of tRNA(Asp/Asn). The sequence is that of Aspartate--tRNA(Asp/Asn) ligase from Rhizobium leguminosarum bv. trifolii (strain WSM2304).